The primary structure comprises 3354 residues: Cadherin-23 (3354 aa).

Positions 1-23 (MGRHVATSCHVAWLLVLISGCWG) are cleaved as a signal peptide. Residues 24-3064 (QVNRLPFFTN…SVRLPDDMSA (3041 aa)) are Extracellular-facing. 27 Cadherin domains span residues 34-132 (HFFD…APTF), 133-236 (HNQP…DPIF), 237-348 (INLP…APEF), 349-460 (NSSE…RPIF), 461-561 (SQPL…VPTF), 562-671 (QKDA…PPTF), 672-784 (SKPA…APYY), 779-890 (KDAP…DPTF), 891-995 (QNLP…TPTF), 996-1102 (FPAV…RPIF), 1103-1208 (LQSS…APVF), 1210-1313 (QQQY…AVQF), 1314-1418 (SNAS…SPRF), 1420-1527 (FTSD…PPVI), 1529-1634 (SPFG…APMF), 1635-1744 (QQPH…VPTF), 1745-1851 (PRDY…DPVL), 1852-1959 (LNLP…HPLF), 1960-2069 (TKST…RPTF), 2070-2174 (SPAT…RPEF), 2175-2293 (LNPI…TPQF), 2297-2402 (GITY…NPIF), 2403-2509 (DQPS…RPQF), 2510-2611 (SKPQ…RPVF), 2614-2722 (PPNG…EPLF), 2729-2846 (SPQY…PPRF), and 2847-2975 (TKAE…EEEF). N-linked (GlcNAc...) asparagine glycans are attached at residues asparagine 155 and asparagine 206. Asparagine 349, asparagine 393, asparagine 434, asparagine 466, asparagine 472, asparagine 652, asparagine 694, asparagine 765, asparagine 810, asparagine 827, asparagine 941, asparagine 1001, asparagine 1018, asparagine 1171, asparagine 1282, asparagine 1315, asparagine 1473, asparagine 1534, asparagine 1651, asparagine 1667, asparagine 1818, asparagine 1857, asparagine 1889, asparagine 1902, asparagine 2013, asparagine 2050, asparagine 2129, asparagine 2168, asparagine 2195, asparagine 2263, asparagine 2357, and asparagine 2369 each carry an N-linked (GlcNAc...) asparagine glycan. Residues asparagine 2616, asparagine 2749, asparagine 2808, asparagine 2877, asparagine 2896, asparagine 2941, and asparagine 2981 are each glycosylated (N-linked (GlcNAc...) asparagine). A helical membrane pass occupies residues 3065–3085 (LQMAIIVLAILLFLAAMLFVL). Residues 3086-3354 (MNWYYRTVHK…METPLEITEL (269 aa)) lie on the Cytoplasmic side of the membrane.

Antiparallel heterodimer with PCDH15. Interacts with USH1C and USH1G. In terms of tissue distribution, particularly strong expression in the retina. Found also in the cochlea.

The protein resides in the cell membrane. In terms of biological role, cadherins are calcium-dependent cell adhesion proteins. They preferentially interact with themselves in a homophilic manner in connecting cells. CDH23 is required for establishing and/or maintaining the proper organization of the stereocilia bundle of hair cells in the cochlea and the vestibule during late embryonic/early postnatal development. It is part of the functional network formed by USH1C, USH1G, CDH23 and MYO7A that mediates mechanotransduction in cochlear hair cells. Required for normal hearing. This Homo sapiens (Human) protein is Cadherin-23.